Consider the following 161-residue polypeptide: Globin CTT-IX (161 aa).

The first 16 residues, 1–16, serve as a signal peptide directing secretion; that stretch reads MKFFIVLALCIVGAIA. In terms of domain architecture, Globin spans 18 to 161; it reads PVSSDQANAI…NIFGMIFAHL (144 aa). 2 residues coordinate heme b: His76 and His111.

The protein belongs to the globin family. As to quaternary structure, homodimer.

This chain is Globin CTT-IX (CTT-9), found in Chironomus thummi thummi (Midge).